Consider the following 141-residue polypeptide: Nucleoside triphosphatase NudI (141 aa).

Positions Met1–Leu141 constitute a Nudix hydrolase domain. Positions Gly38–Gly59 match the Nudix box motif.

This sequence belongs to the Nudix hydrolase family. NudI subfamily. Monomer. Mg(2+) serves as cofactor.

It catalyses the reaction a ribonucleoside 5'-triphosphate + H2O = a ribonucleoside 5'-phosphate + diphosphate + H(+). It carries out the reaction a 2'-deoxyribonucleoside 5'-triphosphate + H2O = a 2'-deoxyribonucleoside 5'-phosphate + diphosphate + H(+). The enzyme catalyses dUTP + H2O = dUMP + diphosphate + H(+). The catalysed reaction is dTTP + H2O = dTMP + diphosphate + H(+). It catalyses the reaction dCTP + H2O = dCMP + diphosphate + H(+). In terms of biological role, catalyzes the hydrolysis of nucleoside triphosphates, with a preference for pyrimidine deoxynucleoside triphosphates (dUTP, dTTP and dCTP). This chain is Nucleoside triphosphatase NudI, found in Salmonella heidelberg (strain SL476).